Reading from the N-terminus, the 367-residue chain is Histidinol-phosphate aminotransferase (367 aa).

Lys230 carries the post-translational modification N6-(pyridoxal phosphate)lysine.

This sequence belongs to the class-II pyridoxal-phosphate-dependent aminotransferase family. Histidinol-phosphate aminotransferase subfamily. Homodimer. It depends on pyridoxal 5'-phosphate as a cofactor.

The enzyme catalyses L-histidinol phosphate + 2-oxoglutarate = 3-(imidazol-4-yl)-2-oxopropyl phosphate + L-glutamate. Its pathway is amino-acid biosynthesis; L-histidine biosynthesis; L-histidine from 5-phospho-alpha-D-ribose 1-diphosphate: step 7/9. This is Histidinol-phosphate aminotransferase from Thermobifida fusca (strain YX).